We begin with the raw amino-acid sequence, 208 residues long: Uracil phosphoribosyltransferase (208 aa).

5-phospho-alpha-D-ribose 1-diphosphate-binding positions include Arg78, Arg103, and 130 to 138; that span reads DPMLATGGS. Residues Ile193 and 198-200 each bind uracil; that span reads GDA. 5-phospho-alpha-D-ribose 1-diphosphate is bound at residue Asp199.

The protein belongs to the UPRTase family. The cofactor is Mg(2+).

It catalyses the reaction UMP + diphosphate = 5-phospho-alpha-D-ribose 1-diphosphate + uracil. It participates in pyrimidine metabolism; UMP biosynthesis via salvage pathway; UMP from uracil: step 1/1. Allosterically activated by GTP. In terms of biological role, catalyzes the conversion of uracil and 5-phospho-alpha-D-ribose 1-diphosphate (PRPP) to UMP and diphosphate. The polypeptide is Uracil phosphoribosyltransferase (Photorhabdus laumondii subsp. laumondii (strain DSM 15139 / CIP 105565 / TT01) (Photorhabdus luminescens subsp. laumondii)).